Here is a 197-residue protein sequence, read N- to C-terminus: Molybdenum cofactor guanylyltransferase (197 aa).

Residues 10–12 (LAG), K23, D69, and D99 each bind GTP. Mg(2+) is bound at residue D99.

Belongs to the MobA family. In terms of assembly, monomer. The cofactor is Mg(2+).

Its subcellular location is the cytoplasm. It carries out the reaction Mo-molybdopterin + GTP + H(+) = Mo-molybdopterin guanine dinucleotide + diphosphate. Transfers a GMP moiety from GTP to Mo-molybdopterin (Mo-MPT) cofactor (Moco or molybdenum cofactor) to form Mo-molybdopterin guanine dinucleotide (Mo-MGD) cofactor. This chain is Molybdenum cofactor guanylyltransferase, found in Serratia proteamaculans (strain 568).